A 232-amino-acid polypeptide reads, in one-letter code: Aspartate/glutamate leucyltransferase (232 aa).

The protein belongs to the R-transferase family. Bpt subfamily.

It localises to the cytoplasm. The catalysed reaction is N-terminal L-glutamyl-[protein] + L-leucyl-tRNA(Leu) = N-terminal L-leucyl-L-glutamyl-[protein] + tRNA(Leu) + H(+). The enzyme catalyses N-terminal L-aspartyl-[protein] + L-leucyl-tRNA(Leu) = N-terminal L-leucyl-L-aspartyl-[protein] + tRNA(Leu) + H(+). Functionally, functions in the N-end rule pathway of protein degradation where it conjugates Leu from its aminoacyl-tRNA to the N-termini of proteins containing an N-terminal aspartate or glutamate. The protein is Aspartate/glutamate leucyltransferase of Vibrio vulnificus (strain CMCP6).